The chain runs to 315 residues: Jacalin-related lectin 10 (315 aa).

The signal sequence occupies residues 1–23 (MVIIYIFLFLSSAIIDSTGLAKA). 2 Jacalin-type lectin domains span residues 24-165 (QKLD…YLTT) and 168-312 (PTKS…YFSP).

It belongs to the jacalin lectin family.

This chain is Jacalin-related lectin 10 (JAL10), found in Arabidopsis thaliana (Mouse-ear cress).